The primary structure comprises 383 residues: Creatine kinase, testis isozyme (383 aa).

Residues 14–100 (KRLSPEEEFP…LDPIIEDRHG (87 aa)) form the Phosphagen kinase N-terminal domain. The segment covering 99–112 (HGGYKPTDKHKTDL) has biased composition (basic and acidic residues). The disordered stretch occupies residues 99 to 119 (HGGYKPTDKHKTDLNPDNLKG). Residues 127–369 (YVISSRVRTG…KLLVEMEKKL (243 aa)) form the Phosphagen kinase C-terminal domain. ATP is bound by residues 130 to 134 (SSRVR), histidine 193, arginine 238, arginine 294, 322 to 327 (RGTGGV), and aspartate 337.

It belongs to the ATP:guanido phosphotransferase family. As to expression, exists in many tissues, but preferentially in testis.

It catalyses the reaction creatine + ATP = N-phosphocreatine + ADP + H(+). In terms of biological role, reversibly catalyzes the transfer of phosphate between ATP and various phosphogens (e.g. creatine phosphate). Creatine kinase isoenzymes play a central role in energy transduction in tissues with large, fluctuating energy demands, such as skeletal muscle, heart, brain and spermatozoa. In Oncorhynchus mykiss (Rainbow trout), this protein is Creatine kinase, testis isozyme (tck1).